Consider the following 159-residue polypeptide: RNA pyrophosphohydrolase (159 aa).

In terms of domain architecture, Nudix hydrolase spans 6–149 (GFRPNVGIIL…KREVYRRALK (144 aa)). The Nudix box signature appears at 38–59 (GGINPDETPEDALYRELNEEVG).

This sequence belongs to the Nudix hydrolase family. RppH subfamily. Requires a divalent metal cation as cofactor.

In terms of biological role, accelerates the degradation of transcripts by removing pyrophosphate from the 5'-end of triphosphorylated RNA, leading to a more labile monophosphorylated state that can stimulate subsequent ribonuclease cleavage. The chain is RNA pyrophosphohydrolase from Pseudomonas entomophila (strain L48).